We begin with the raw amino-acid sequence, 217 residues long: uncharacterized protein (217 aa).

Transmembrane regions (helical) follow at residues Ile-13–Leu-35, Phe-50–Leu-68, Phe-75–Ile-94, Met-109–Leu-131, Tyr-152–Val-174, and Gly-194–Leu-216.

Its subcellular location is the cell membrane. This is an uncharacterized protein from Archaeoglobus fulgidus (strain ATCC 49558 / DSM 4304 / JCM 9628 / NBRC 100126 / VC-16).